The following is a 185-amino-acid chain: Photosystem I assembly protein Ycf4 (185 aa).

Helical transmembrane passes span 20-40 (GNFFWACILFLGSLGFLSVGA) and 57-77 (ILFFPQGVVMSFYGIAGLFIS).

Belongs to the Ycf4 family.

The protein localises to the plastid. The protein resides in the chloroplast thylakoid membrane. Its function is as follows. Seems to be required for the assembly of the photosystem I complex. This Lolium perenne (Perennial ryegrass) protein is Photosystem I assembly protein Ycf4.